A 632-amino-acid polypeptide reads, in one-letter code: U-box domain-containing protein 14 (632 aa).

In terms of domain architecture, U-box spans 247–321 (VIPEYFRCPI…ALWCESNGIE (75 aa)). 5 ARM repeats span residues 377–416 (VDNRVCIAEAGAIPLLVELLSSPDPRTQEHSVTALLNLSI), 418–457 (EGNKGAIVDAGAITDIVEVLKNGSMEARENAAATLFSLSV), 459–498 (DENKVAIGAAGAIQALISLLEEGTRRGKKDAATAIFNLCI), 500–539 (QGNKSRAVKGGIVDPLTRLLKDAGGGMVDEALAILAILST), and 541–580 (QEGKTAIAEAESIPVLVEIIRTGSPRNRENAAAILWYLCI).

As to quaternary structure, homodimer. Interacts with SNL1. Binds to SD11, SD16, SD17, SD18, SD113, SD129 and SD25. In terms of tissue distribution, expressed in flowers, green siliques, seeds and rosette leaves.

It carries out the reaction S-ubiquitinyl-[E2 ubiquitin-conjugating enzyme]-L-cysteine + [acceptor protein]-L-lysine = [E2 ubiquitin-conjugating enzyme]-L-cysteine + N(6)-ubiquitinyl-[acceptor protein]-L-lysine.. It functions in the pathway protein modification; protein ubiquitination. Functions as an E3 ubiquitin ligase with specific E2 ubiquitin-conjugating enzymes. Undergoes auto-ubiquitination. The protein is U-box domain-containing protein 14 (PUB14) of Arabidopsis thaliana (Mouse-ear cress).